The sequence spans 175 residues: Epididymal-specific lipocalin-8 (175 aa).

An N-terminal signal peptide occupies residues 1–25; it reads MPGAAEALPTVTVTLVAGAVPPASG. Residues Asn-66 and Asn-74 are each glycosylated (N-linked (GlcNAc...) asparagine). Cys-79 and Cys-166 form a disulfide bridge.

Belongs to the calycin superfamily. Lipocalin family.

It is found in the secreted. In terms of biological role, may play a role in male fertility. May act as a retinoid carrier protein within the epididymis. The protein is Epididymal-specific lipocalin-8 (LCN8) of Homo sapiens (Human).